Reading from the N-terminus, the 278-residue chain is Energy-coupling factor transporter ATP-binding protein EcfA1 (278 aa).

The region spanning 5 to 240 is the ABC transporter domain; it reads IEVRNLKYKY…EDLEELGLDQ (236 aa). 40–47 lines the ATP pocket; sequence GHNGSGKS.

Belongs to the ABC transporter superfamily. Energy-coupling factor EcfA family. In terms of assembly, forms a stable energy-coupling factor (ECF) transporter complex composed of 2 membrane-embedded substrate-binding proteins (S component), 2 ATP-binding proteins (A component) and 2 transmembrane proteins (T component).

It localises to the cell membrane. ATP-binding (A) component of a common energy-coupling factor (ECF) ABC-transporter complex. Unlike classic ABC transporters this ECF transporter provides the energy necessary to transport a number of different substrates. The protein is Energy-coupling factor transporter ATP-binding protein EcfA1 of Streptococcus sanguinis (strain SK36).